A 164-amino-acid chain; its full sequence is Phosphopantetheine adenylyltransferase (164 aa).

S9 serves as a coordination point for substrate. ATP is bound by residues 9–10 and H17; that span reads SF. Substrate contacts are provided by K41, L73, and K87. ATP is bound by residues 88–90, E98, and 122–128; these read GLR and YSYLSSS.

This sequence belongs to the bacterial CoaD family. In terms of assembly, homohexamer. Mg(2+) is required as a cofactor.

It is found in the cytoplasm. The enzyme catalyses (R)-4'-phosphopantetheine + ATP + H(+) = 3'-dephospho-CoA + diphosphate. The protein operates within cofactor biosynthesis; coenzyme A biosynthesis; CoA from (R)-pantothenate: step 4/5. In terms of biological role, reversibly transfers an adenylyl group from ATP to 4'-phosphopantetheine, yielding dephospho-CoA (dPCoA) and pyrophosphate. The sequence is that of Phosphopantetheine adenylyltransferase from Rhodococcus erythropolis (strain PR4 / NBRC 100887).